Reading from the N-terminus, the 602-residue chain is T-box transcription factor TBX15 (602 aa).

Residues 46 to 84 (ALSPAGPLGDTEDAAAHGLEPHPDSEQSTGSDSEVLTER) are disordered. Residues 71 to 84 (EQSTGSDSEVLTER) are compositionally biased toward polar residues. A DNA-binding region (T-box) is located at residues 122-304 (LWKRFHDIGT…RNPFAKGFRD (183 aa)). At threonine 330 the chain carries Phosphothreonine. Disordered regions lie at residues 338–369 (QKQQ…LSPS) and 425–447 (QSGT…PSLI). Over residues 346–369 (GTSPTTSSTGTPSPSASSHLLSPS) the composition is skewed to low complexity. Residues 425–446 (QSGTTSATQPSETFMPQRTPSL) show a composition bias toward polar residues.

As to quaternary structure, can form a heterodimer with TBX18.

It localises to the nucleus. Its function is as follows. Probable transcriptional regulator involved in the development of the skeleton of the limb, vertebral column and head. Acts by controlling the number of mesenchymal precursor cells and chondrocytes. The polypeptide is T-box transcription factor TBX15 (TBX15) (Homo sapiens (Human)).